Consider the following 506-residue polypeptide: Cobyric acid synthase (506 aa).

One can recognise a GATase cobBQ-type domain in the interval 251–448 (DITIAIVQLP…LHGLFDSDAF (198 aa)). C332 serves as the catalytic Nucleophile. H440 is an active-site residue.

This sequence belongs to the CobB/CobQ family. CobQ subfamily. In terms of assembly, homodimer.

Its pathway is cofactor biosynthesis; adenosylcobalamin biosynthesis. Its function is as follows. Catalyzes amidations at positions B, D, E, and G on adenosylcobyrinic A,C-diamide. NH(2) groups are provided by glutamine, and one molecule of ATP is hydrogenolyzed for each amidation. In Salmonella typhimurium (strain LT2 / SGSC1412 / ATCC 700720), this protein is Cobyric acid synthase (cbiP).